The sequence spans 141 residues: Hemoglobin subunit alpha-A (141 aa).

Residues 1 to 141 form the Globin domain; sequence VLSSGDKANV…VSTVLTSKYR (141 aa). His-58 serves as a coordination point for O2. Residue His-87 participates in heme b binding.

Belongs to the globin family. As to quaternary structure, heterotetramer of two alpha chains and two beta chains. In terms of tissue distribution, red blood cells.

Its function is as follows. Involved in oxygen transport from the lung to the various peripheral tissues. The protein is Hemoglobin subunit alpha-A (HBAA) of Caretta caretta (Loggerhead sea turtle).